A 288-amino-acid chain; its full sequence is Carbon monoxide dehydrogenase medium chain (288 aa).

The region spanning 1-177 (MIPGSFDYHR…TAIRIPVPPT (177 aa)) is the FAD-binding PCMH-type domain. Residues 32-36 (AGGHS) and 111-115 (TIGGN) each bind FAD.

As to quaternary structure, dimer of heterotrimers. Each heterotrimer consists of a large, a medium and a small subunit. FAD is required as a cofactor.

It catalyses the reaction CO + a quinone + H2O = a quinol + CO2. Catalyzes the oxidation of carbon monoxide to carbon dioxide. This chain is Carbon monoxide dehydrogenase medium chain (coxM), found in Afipia carboxidovorans (strain ATCC 49405 / DSM 1227 / KCTC 32145 / OM5) (Oligotropha carboxidovorans).